Consider the following 173-residue polypeptide: UPF0398 protein SMU_470 (173 aa).

This sequence belongs to the UPF0398 family.

The polypeptide is UPF0398 protein SMU_470 (Streptococcus mutans serotype c (strain ATCC 700610 / UA159)).